A 281-amino-acid polypeptide reads, in one-letter code: Tetraspanin-5 (281 aa).

Topologically, residues 1–7 are cytoplasmic; that stretch reads MNRMSNT. The chain crosses the membrane as a helical span at residues 8–28; that stretch reads VIGFLNILTLISSIVLLGSAL. Topologically, residues 29–44 are extracellular; that stretch reads WMGRSKTTCEHFLQKP. A helical membrane pass occupies residues 45 to 65; that stretch reads LLILGLAILILSVAGLVGACC. The Cytoplasmic segment spans residues 66 to 74; sequence DVAWVLWVY. The helical transmembrane segment at 75 to 95 threads the bilayer; sequence LFFMVFIIVALMGLTLFGFIV. The Extracellular portion of the chain corresponds to 96 to 221; that stretch reads TSHSGGVVVD…TVRRDWHKLS (126 aa). Residues 222–242 traverse the membrane as a helical segment; it reads LVNVIVVIFLIAVYCVGCCAF. Residues 243 to 281 are Cytoplasmic-facing; sequence KNAKRPQHYGFPYGRYGMSKSRPGWEQSWSRWWHGRDRY.

The protein belongs to the tetraspanin (TM4SF) family.

It localises to the membrane. May be involved in the regulation of cell differentiation. In Arabidopsis thaliana (Mouse-ear cress), this protein is Tetraspanin-5 (TET5).